The following is a 334-amino-acid chain: Protein-methionine-sulfoxide reductase catalytic subunit MsrP (334 aa).

Residues 1–44 (MKKIRKLTEADVTAESAFFMQRRQVLKALGISAAALSLPNAAHA) constitute a signal peptide (tat-type signal). Residues Asn-88, 91–92 (YE), Cys-146, Thr-181, Asn-233, Arg-238, and 249–251 (GIK) contribute to the Mo-molybdopterin site.

It belongs to the MsrP family. Heterodimer of a catalytic subunit (MsrP) and a heme-binding subunit (MsrQ). The cofactor is Mo-molybdopterin. In terms of processing, predicted to be exported by the Tat system. The position of the signal peptide cleavage has not been experimentally proven.

The protein localises to the periplasm. The catalysed reaction is L-methionyl-[protein] + a quinone + H2O = L-methionyl-(S)-S-oxide-[protein] + a quinol. It catalyses the reaction L-methionyl-[protein] + a quinone + H2O = L-methionyl-(R)-S-oxide-[protein] + a quinol. Its function is as follows. Part of the MsrPQ system that repairs oxidized periplasmic proteins containing methionine sulfoxide residues (Met-O), using respiratory chain electrons. Thus protects these proteins from oxidative-stress damage caused by reactive species of oxygen and chlorine generated by the host defense mechanisms. MsrPQ is essential for the maintenance of envelope integrity under bleach stress, rescuing a wide series of structurally unrelated periplasmic proteins from methionine oxidation, including the primary periplasmic chaperone SurA and the lipoprotein Pal. The catalytic subunit MsrP is non-stereospecific, being able to reduce both (R-) and (S-) diastereoisomers of methionine sulfoxide. The polypeptide is Protein-methionine-sulfoxide reductase catalytic subunit MsrP (Escherichia fergusonii (strain ATCC 35469 / DSM 13698 / CCUG 18766 / IAM 14443 / JCM 21226 / LMG 7866 / NBRC 102419 / NCTC 12128 / CDC 0568-73)).